A 510-amino-acid chain; its full sequence is Leucine-rich repeat-containing protein 14B (510 aa).

Residues 100 to 137 (SNRLRVADFTGIQDVQVQQCPCGRALGRWGRTKVLART) form an LRR 1; degenerate repeat. The stretch at 181-205 (QVCCPSLRADSLSPGQLLQVLGLAG) is one LRR 2; degenerate repeat. An LRR 4; degenerate repeat occupies 234-273 (FPQLTSLTLPTKAFDAPPTCAPDPEGEDLLLTSIAWELSQ). LRR repeat units lie at residues 274 to 298 (MNQLTELSVAFSTLTGKIQTLLSPL), 299 to 330 (KTPLRVLDLANCALNHEDISFLADCNHTAHLE), 331 to 349 (VLDLSGHNLVHLYPSTFFR), 355 to 382 (AQTLRVLTLEECNITDSHVNMMILGLSP), and 383 to 407 (CSQLQQFKFLGNPLSGSALRRLFAA).

Belongs to the PRAME family. LRRC14 subfamily.

This is Leucine-rich repeat-containing protein 14B from Mus musculus (Mouse).